A 556-amino-acid chain; its full sequence is Urocanate hydratase (556 aa).

NAD(+) contacts are provided by residues 52-53, glutamine 130, 176-178, glutamate 196, arginine 201, 242-243, 263-267, 273-274, and tyrosine 322; these read GG, GMG, NA, QTSAH, and YL. Cysteine 410 is an active-site residue. Glycine 492 provides a ligand contact to NAD(+).

This sequence belongs to the urocanase family. The cofactor is NAD(+).

The protein resides in the cytoplasm. It carries out the reaction 4-imidazolone-5-propanoate = trans-urocanate + H2O. It participates in amino-acid degradation; L-histidine degradation into L-glutamate; N-formimidoyl-L-glutamate from L-histidine: step 2/3. Catalyzes the conversion of urocanate to 4-imidazolone-5-propionate. The chain is Urocanate hydratase from Shewanella sp. (strain ANA-3).